Here is a 152-residue protein sequence, read N- to C-terminus: Histone H2B.1 (152 aa).

Basic and acidic residues predominate over residues 1 to 28; sequence MAPKAEKKPAAKKPAEEEPAAEKAEKTP. Residues 1-60 are disordered; it reads MAPKAEKKPAAKKPAEEEPAAEKAEKTPAGKKPKAEKRLPAGKSAAKEGGDKKGKKKAKK. N6-acetyllysine occurs at positions 7 and 37. Lys-148 is covalently cross-linked (Glycyl lysine isopeptide (Lys-Gly) (interchain with G-Cter in ubiquitin)).

It belongs to the histone H2B family. As to quaternary structure, the nucleosome is a histone octamer containing two molecules each of H2A, H2B, H3 and H4 assembled in one H3-H4 heterotetramer and two H2A-H2B heterodimers. The octamer wraps approximately 147 bp of DNA. In terms of processing, can be acetylated to form H2BK6ac and H2BK33ac. Monoubiquitinated to form H2BK143ub1; may give a specific tag for epigenetic transcriptional activation.

It localises to the nucleus. It is found in the chromosome. Functionally, core component of nucleosome. Nucleosomes wrap and compact DNA into chromatin, limiting DNA accessibility to the cellular machineries which require DNA as a template. Histones thereby play a central role in transcription regulation, DNA repair, DNA replication and chromosomal stability. DNA accessibility is regulated via a complex set of post-translational modifications of histones, also called histone code, and nucleosome remodeling. This chain is Histone H2B.1, found in Triticum aestivum (Wheat).